The following is a 919-amino-acid chain: MFS-type transporter clz9 (919 aa).

A compositionally biased stretch (polar residues) spans 1-11 (MAASTKPTTKL). The disordered stretch occupies residues 1–33 (MAASTKPTTKLSTEEDDVSRRDSESSADFMKSN). A helical transmembrane segment spans residues 69-89 (VVASFAAAISPFSTSTYYPVV). A glycan (N-linked (GlcNAc...) asparagine) is linked at N104. 3 helical membrane-spanning segments follow: residues 132–152 (PMFL…ALQN), 192–212 (LIYA…IGGL), and 222–242 (VFWF…IFFG). N260 is a glycosylation site (N-linked (GlcNAc...) asparagine). The next 4 membrane-spanning stretches (helical) occupy residues 303–323 (FILS…TSVL), 333–353 (YDAV…LLAY), 393–413 (LGFV…YGWQ), and 418–438 (APLA…TGVM). The N-linked (GlcNAc...) asparagine glycan is linked to N461. Residues 465–485 (LLLGAGAVAVVGPLNKSAGIG) traverse the membrane as a helical segment. The 169-residue stretch at 641 to 809 (REWVTLIQGI…FTSANICSSF (169 aa)) folds into the DDE-1 domain. Residues 840–897 (EAPWEAKTPSNRKKKQIQKRGTLTKGEGEDTLAQKEADQQIEREQRQGGEQSGRSRQA) form a disordered region. Over residues 865–886 (GEGEDTLAQKEADQQIEREQRQ) the composition is skewed to basic and acidic residues. Positions 887–896 (GGEQSGRSRQ) are enriched in low complexity. An N-linked (GlcNAc...) asparagine glycan is attached at N915.

Belongs to the major facilitator superfamily. CAR1 family.

Its subcellular location is the membrane. Functionally, MFS-type transporter; part of the gene cluster that mediates the biosynthesis of squalestatin S1 (SQS1, also known as zaragozic acid A), a heavily oxidized fungal polyketide that offers potent cholesterol lowering activity by targeting squalene synthase (SS). The polypeptide is MFS-type transporter clz9 (Cochliobolus lunatus (Filamentous fungus)).